A 635-amino-acid polypeptide reads, in one-letter code: 1-deoxy-D-xylulose-5-phosphate synthase (635 aa).

Thiamine diphosphate is bound by residues His74 and 115–117; that span reads GHA. Residue Asp146 participates in Mg(2+) binding. Thiamine diphosphate contacts are provided by residues 147–148, Asn175, Tyr285, and Glu367; that span reads GA. Residue Asn175 participates in Mg(2+) binding.

This sequence belongs to the transketolase family. DXPS subfamily. In terms of assembly, homodimer. Mg(2+) is required as a cofactor. The cofactor is thiamine diphosphate.

It carries out the reaction D-glyceraldehyde 3-phosphate + pyruvate + H(+) = 1-deoxy-D-xylulose 5-phosphate + CO2. It participates in metabolic intermediate biosynthesis; 1-deoxy-D-xylulose 5-phosphate biosynthesis; 1-deoxy-D-xylulose 5-phosphate from D-glyceraldehyde 3-phosphate and pyruvate: step 1/1. In terms of biological role, catalyzes the acyloin condensation reaction between C atoms 2 and 3 of pyruvate and glyceraldehyde 3-phosphate to yield 1-deoxy-D-xylulose-5-phosphate (DXP). This chain is 1-deoxy-D-xylulose-5-phosphate synthase, found in Anaeromyxobacter sp. (strain Fw109-5).